Reading from the N-terminus, the 506-residue chain is MEFSTKALDWAKAGPSGALAAKSDCLVIGLFESQTLAGAAKALDVATKGLVGRLVKLGDFEGKRGTSLLLHEVAGVGAARVLLVGLGKEAEFTDRAYAEAVRTALRALSGTKAANVTWTLTQQPARDKDAAWAVLTAVTLIREAGYRFIERHPELKSKRDKSGGGLRKVMLTVDAADAKAAAVAAARGAAIANGMELTRDLGNLPSNICTPTYLANTARQIAKDFKLKVEVLGRKQIEALKMGAFLAVTKGSQEPPQFIVLRYEGGPAKQAPVVLVGKGITFDTGGISLKPGEGMDEMKFDMCGAASVLGTLRAVAEMGLKLNVIAVVPTCENMPSGIATKPGDVVTSMSGQTIEILNTDAEGRLILCDALTYVERFRPAAVIDVATLTGAVIIALGHINTGVYARSDALANALLAAGKQSLDTGWRMPLDEEYQELLKSNFADMGNIGGRPAASVTAACFLARFTEKYDWAHLDIAGTAWKSGAAKGATGRPVPLLTRFLMDRAG.

Residues Lys-278 and Asp-283 each contribute to the Mn(2+) site. Lys-290 is an active-site residue. Mn(2+)-binding residues include Asp-301, Asp-360, and Glu-362. The active site involves Arg-364.

This sequence belongs to the peptidase M17 family. It depends on Mn(2+) as a cofactor.

The protein resides in the cytoplasm. The catalysed reaction is Release of an N-terminal amino acid, Xaa-|-Yaa-, in which Xaa is preferably Leu, but may be other amino acids including Pro although not Arg or Lys, and Yaa may be Pro. Amino acid amides and methyl esters are also readily hydrolyzed, but rates on arylamides are exceedingly low.. The enzyme catalyses Release of an N-terminal amino acid, preferentially leucine, but not glutamic or aspartic acids.. Its function is as follows. Presumably involved in the processing and regular turnover of intracellular proteins. Catalyzes the removal of unsubstituted N-terminal amino acids from various peptides. The protein is Probable cytosol aminopeptidase of Ralstonia nicotianae (strain ATCC BAA-1114 / GMI1000) (Ralstonia solanacearum).